Reading from the N-terminus, the 492-residue chain is Sestrin-1 (492 aa).

Residues 71 to 252 (FADSFAALGR…ICDITNGNHS (182 aa)) form an N-terminal domain; may mediate the alkylhydroperoxide reductase activity region. Cys-130 (cysteine sulfenic acid (-SOH) intermediate) is an active-site residue. Phosphoserine occurs at positions 293 and 314. The interval 321-492 (PARDVSRHFE…ALRAITRYMT (172 aa)) is C-terminal domain; mediates TORC1 regulation. Residues 386–389 (TYNT), Thr-398, and Glu-463 each bind L-leucine.

This sequence belongs to the sestrin family. In terms of assembly, interacts with the GATOR2 complex which is composed of MIOS, SEC13, SEH1L, WDR24 and WDR59; the interaction is negatively regulated by leucine. Interacts with RRAGA, RRAGB, RRAGC and RRAGD; may function as a guanine nucleotide dissociation inhibitor for RRAGs and regulate them. Interacts with KEAP1, RBX1 and SQSTM1; in the SQSTM1-dependent autophagic degradation of KEAP1. May interact with PRDX1.

The protein resides in the nucleus. It is found in the cytoplasm. The catalysed reaction is a hydroperoxide + L-cysteinyl-[protein] = S-hydroxy-L-cysteinyl-[protein] + an alcohol. Functions as an intracellular leucine sensor that negatively regulates the TORC1 signaling pathway through the GATOR complex. In absence of leucine, binds the GATOR subcomplex GATOR2 and prevents TORC1 signaling. Binding of leucine to SESN2 disrupts its interaction with GATOR2 thereby activating the TORC1 signaling pathway. This stress-inducible metabolic regulator may also play a role in protection against oxidative and genotoxic stresses. May positively regulate the transcription by NFE2L2 of genes involved in the response to oxidative stress by facilitating the SQSTM1-mediated autophagic degradation of KEAP1. Moreover, may prevent the accumulation of reactive oxygen species (ROS) through the alkylhydroperoxide reductase activity born by the N-terminal domain of the protein. Was originally reported to contribute to oxidative stress resistance by reducing PRDX1. However, this could not be confirmed. The protein is Sestrin-1 of Macaca fascicularis (Crab-eating macaque).